A 250-amino-acid polypeptide reads, in one-letter code: MSVTPSIDAVRDLRAASCGPVGAPSVTSELSENIILTSLDDLHNWARLSSLWPLLYGTACCFIEFAALIGSRFDFDRFGLVPRSSPRQADLLIVAGTVTMKMAPALVRLYEQMPEPKYVIAMGACTITGGMFSADSTTAVRGVDKLIPVDLYLPGCPPRPEAIFDAVIKLRKKVGDESVSERIKIAQTHRYFTVPHQMKRVEPIVTGAYLSADTQKAALSPGAGLPMAAELNTSEIDASPASQPSSTYES.

The [4Fe-4S] cluster site is built by Cys-60, Cys-61, Cys-125, and Cys-156. Residues Glu-230–Ser-250 are disordered. The segment covering Leu-231–Ser-250 has biased composition (polar residues).

This sequence belongs to the complex I 20 kDa subunit family. In terms of assembly, NDH-1 can be composed of about 15 different subunits; different subcomplexes with different compositions have been identified which probably have different functions. The cofactor is [4Fe-4S] cluster.

Its subcellular location is the cellular thylakoid membrane. It catalyses the reaction a plastoquinone + NADH + (n+1) H(+)(in) = a plastoquinol + NAD(+) + n H(+)(out). The enzyme catalyses a plastoquinone + NADPH + (n+1) H(+)(in) = a plastoquinol + NADP(+) + n H(+)(out). Functionally, NDH-1 shuttles electrons from an unknown electron donor, via FMN and iron-sulfur (Fe-S) centers, to quinones in the respiratory and/or the photosynthetic chain. The immediate electron acceptor for the enzyme in this species is believed to be plastoquinone. Couples the redox reaction to proton translocation, and thus conserves the redox energy in a proton gradient. Cyanobacterial NDH-1 also plays a role in inorganic carbon-concentration. The chain is NAD(P)H-quinone oxidoreductase subunit K from Prochlorococcus marinus (strain MIT 9303).